A 125-amino-acid chain; its full sequence is Large ribosomal subunit protein eL31 (125 aa).

Met1 carries the N-acetylmethionine modification. A Phosphoserine modification is found at Ser15. N6-succinyllysine is present on residues Lys55 and Lys70. Residue Lys75 is modified to N6-acetyllysine; alternate. Lys75 is subject to N6-succinyllysine; alternate. Ser98 carries the post-translational modification Phosphoserine.

It belongs to the eukaryotic ribosomal protein eL31 family. Component of the large ribosomal subunit.

The protein resides in the cytoplasm. Component of the large ribosomal subunit. The ribosome is a large ribonucleoprotein complex responsible for the synthesis of proteins in the cell. This is Large ribosomal subunit protein eL31 (RPL31) from Oryctolagus cuniculus (Rabbit).